The following is a 512-amino-acid chain: NAD(P)H-quinone oxidoreductase subunit 2, organellar chromatophore (512 aa).

14 helical membrane-spanning segments follow: residues 6–26 (LLAL…LLAL), 43–63 (WVPP…ASQW), 80–100 (LAIA…MISW), 107–127 (GAPM…AMFL), 133–153 (LVSI…LAGY), 168–188 (LLVG…LYGL), 210–230 (AALA…AVPF), 242–262 (PTPI…ALAL), 276–296 (WKFL…IVAL), 304–324 (MLAY…VCGT), 332–352 (ILYL…VILF), 376–396 (IGLS…GFFG), 411–431 (LLVV…ISVI), and 464–484 (VALL…NPLF).

Belongs to the complex I subunit 2 family. As to quaternary structure, NDH-1 can be composed of about 15 different subunits; different subcomplexes with different compositions have been identified which probably have different functions.

It localises to the plastid. The protein resides in the organellar chromatophore thylakoid membrane. The catalysed reaction is a plastoquinone + NADH + (n+1) H(+)(in) = a plastoquinol + NAD(+) + n H(+)(out). The enzyme catalyses a plastoquinone + NADPH + (n+1) H(+)(in) = a plastoquinol + NADP(+) + n H(+)(out). NDH-1 shuttles electrons from an unknown electron donor, via FMN and iron-sulfur (Fe-S) centers, to quinones in the respiratory and/or the photosynthetic chain. The immediate electron acceptor for the enzyme in this species is believed to be plastoquinone. Couples the redox reaction to proton translocation, and thus conserves the redox energy in a proton gradient. Cyanobacterial NDH-1 also plays a role in inorganic carbon-concentration. In Paulinella chromatophora, this protein is NAD(P)H-quinone oxidoreductase subunit 2, organellar chromatophore.